Consider the following 533-residue polypeptide: Histone-arginine methyltransferase CARMER (533 aa).

The SAM-dependent MTase PRMT-type domain maps to A143–H452. Positions 156, 165, 189, 211, 240, and 268 each coordinate S-adenosyl-L-methionine. R503 is modified (asymmetric dimethylarginine; by autocatalysis).

Belongs to the class I-like SAM-binding methyltransferase superfamily. Protein arginine N-methyltransferase family. In terms of assembly, homodimer. In terms of processing, the dimethylated protein is the major form.

It localises to the cytoplasm. The protein localises to the nucleus. It carries out the reaction L-arginyl-[protein] + 2 S-adenosyl-L-methionine = N(omega),N(omega)-dimethyl-L-arginyl-[protein] + 2 S-adenosyl-L-homocysteine + 2 H(+). Its function is as follows. Methylates (mono- and asymmetric dimethylation) the guanidino nitrogens of arginyl residues in proteins. May methylate histone H3 at 'Arg-17' and activate transcription via chromatin remodeling. The polypeptide is Histone-arginine methyltransferase CARMER (Art4) (Drosophila willistoni (Fruit fly)).